Here is a 1060-residue protein sequence, read N- to C-terminus: Carbamoyl phosphate synthase large chain (1060 aa).

The segment at 1–401 (MPKRQDIHKI…SLLKAVRSLE (401 aa)) is carboxyphosphate synthetic domain. ATP is bound by residues Arg-129, Arg-169, Gly-175, Gly-176, Arg-208, Ile-210, Glu-215, Gly-241, Val-242, His-243, Gln-284, and Glu-298. The ATP-grasp 1 domain maps to 133–327 (KNLMQKLHEP…IAKMAAKIAV (195 aa)). 3 residues coordinate Mg(2+): Gln-284, Glu-298, and Asn-300. Mn(2+)-binding residues include Gln-284, Glu-298, and Asn-300. Residues 402 to 546 (VGLIHPERPA…YSTYESSTES (145 aa)) are oligomerization domain. The segment at 547-929 (VKSDKPSVLV…ALYKAFEAAG (383 aa)) is carbamoyl phosphate synthetic domain. One can recognise an ATP-grasp 2 domain in the interval 671–861 (DQVIKSLKLP…LAQVATLAIL (191 aa)). 10 residues coordinate ATP: Arg-707, His-746, Leu-748, Glu-752, Gly-777, Ile-778, His-779, Ser-780, Gln-820, and Glu-832. Gln-820, Glu-832, and Asn-834 together coordinate Mg(2+). Mn(2+)-binding residues include Gln-820, Glu-832, and Asn-834. An MGS-like domain is found at 930–1060 (MHLPQFGRAL…QAFSISPIKS (131 aa)). Residues 930 to 1060 (MHLPQFGRAL…QAFSISPIKS (131 aa)) are allosteric domain.

The protein belongs to the CarB family. Composed of two chains; the small (or glutamine) chain promotes the hydrolysis of glutamine to ammonia, which is used by the large (or ammonia) chain to synthesize carbamoyl phosphate. Tetramer of heterodimers (alpha,beta)4. Requires Mg(2+) as cofactor. It depends on Mn(2+) as a cofactor.

It catalyses the reaction hydrogencarbonate + L-glutamine + 2 ATP + H2O = carbamoyl phosphate + L-glutamate + 2 ADP + phosphate + 2 H(+). The enzyme catalyses hydrogencarbonate + NH4(+) + 2 ATP = carbamoyl phosphate + 2 ADP + phosphate + 2 H(+). The protein operates within amino-acid biosynthesis; L-arginine biosynthesis; carbamoyl phosphate from bicarbonate: step 1/1. It participates in pyrimidine metabolism; UMP biosynthesis via de novo pathway; (S)-dihydroorotate from bicarbonate: step 1/3. Its function is as follows. Large subunit of the glutamine-dependent carbamoyl phosphate synthetase (CPSase). CPSase catalyzes the formation of carbamoyl phosphate from the ammonia moiety of glutamine, carbonate, and phosphate donated by ATP, constituting the first step of 2 biosynthetic pathways, one leading to arginine and/or urea and the other to pyrimidine nucleotides. The large subunit (synthetase) binds the substrates ammonia (free or transferred from glutamine from the small subunit), hydrogencarbonate and ATP and carries out an ATP-coupled ligase reaction, activating hydrogencarbonate by forming carboxy phosphate which reacts with ammonia to form carbamoyl phosphate. The chain is Carbamoyl phosphate synthase large chain from Lacticaseibacillus paracasei (strain ATCC 334 / BCRC 17002 / CCUG 31169 / CIP 107868 / KCTC 3260 / NRRL B-441) (Lactobacillus paracasei).